Here is a 364-residue protein sequence, read N- to C-terminus: Putative zinc metalloprotease all3971 (364 aa).

His-17 contacts Zn(2+). The active site involves Glu-18. His-21 lines the Zn(2+) pocket. A run of 3 helical transmembrane segments spans residues 92–114 (AIVI…LAQV), 281–303 (LFFF…LPAL), and 329–346 (VMQT…FLIV). Positions 103–188 (LIFAYMLLLA…KSIQLTVARG (86 aa)) constitute a PDZ domain.

It belongs to the peptidase M50B family. Zn(2+) is required as a cofactor.

The protein localises to the cell inner membrane. In Nostoc sp. (strain PCC 7120 / SAG 25.82 / UTEX 2576), this protein is Putative zinc metalloprotease all3971.